We begin with the raw amino-acid sequence, 159 residues long: RNA pyrophosphohydrolase (159 aa).

A Nudix hydrolase domain is found at 6–149; it reads GFRPNVGIIL…KREVYRRALK (144 aa). The Nudix box motif lies at 38 to 59; the sequence is GGINDRETPEEALYRELNEEVG.

It belongs to the Nudix hydrolase family. RppH subfamily. It depends on a divalent metal cation as a cofactor.

Accelerates the degradation of transcripts by removing pyrophosphate from the 5'-end of triphosphorylated RNA, leading to a more labile monophosphorylated state that can stimulate subsequent ribonuclease cleavage. In Pseudomonas aeruginosa (strain LESB58), this protein is RNA pyrophosphohydrolase.